We begin with the raw amino-acid sequence, 363 residues long: Melanoma-associated antigen B16 (363 aa).

Positions 33-124 are disordered; the sequence is EPCSSPHLMA…PDQSDSTDLP (92 aa). Residues 82–97 are compositionally biased toward low complexity; that stretch reads ASTSSDLQHPYDSSSE. The MAGE domain occupies 128 to 327; it reads VDGKVDFLVN…TVFLSQYEEA (200 aa). Residues 342 to 363 form a disordered region; the sequence is HADSSSTSGESSSDTSSNFSQV.

The sequence is that of Melanoma-associated antigen B16 (Mageb16) from Mus musculus (Mouse).